Reading from the N-terminus, the 320-residue chain is Ubiquinone biosynthesis protein COQ4, mitochondrial (320 aa).

A mitochondrion-targeting transit peptide spans Met-1–Thr-31. Residues His-205, Asp-206, His-209, and Glu-221 each contribute to the Zn(2+) site.

It belongs to the COQ4 family. In terms of assembly, component of a multi-subunit COQ enzyme complex, composed of at least COQ3, COQ4, COQ5, COQ6, COQ7 and COQ9. Zn(2+) is required as a cofactor.

It localises to the mitochondrion inner membrane. It carries out the reaction a 4-hydroxy-3-methoxy-5-(all-trans-polyprenyl)benzoate + H(+) = a 2-methoxy-6-(all-trans-polyprenyl)phenol + CO2. It participates in cofactor biosynthesis; ubiquinone biosynthesis. Functionally, lyase that catalyzes the C1-decarboxylation of 4-hydroxy-3-methoxy-5-(all-trans-polyprenyl)benzoic acid into 2-methoxy-6-(all-trans-polyprenyl)phenol during ubiquinone biosynthesis. The protein is Ubiquinone biosynthesis protein COQ4, mitochondrial of Scheffersomyces stipitis (strain ATCC 58785 / CBS 6054 / NBRC 10063 / NRRL Y-11545) (Yeast).